Reading from the N-terminus, the 186-residue chain is Putative inactive recombination-promoting nuclease-like protein YjiQ (186 aa).

Belongs to the Rpn/YhgA-like nuclease family.

This pseudogene is the C-terminal fragment of low activity DNA endonuclease RpnD which probably yields 3'-hydroxyl ends. The intact protein can be seen in this entry (AC B7NGZ6). Expression of the repaired protein increases the frequency of recA-independent recombination, but also decreases viability probably via DNA damage; in a RecA strain expression has no effect on viability but does induce the SOS repair response. May play a role in horizontal gene transfer. The polypeptide is Putative inactive recombination-promoting nuclease-like protein YjiQ (yjiQ) (Escherichia coli (strain K12)).